A 235-amino-acid chain; its full sequence is Orotidine 5'-phosphate decarboxylase (235 aa).

Residues Asp-12, Lys-34, 61–70 (DMKLLDIDNT), Thr-116, Arg-177, Gln-186, Gly-206, and Arg-207 contribute to the substrate site. Residue Lys-63 is the Proton donor of the active site.

The protein belongs to the OMP decarboxylase family. Type 1 subfamily. In terms of assembly, homodimer.

It carries out the reaction orotidine 5'-phosphate + H(+) = UMP + CO2. It participates in pyrimidine metabolism; UMP biosynthesis via de novo pathway; UMP from orotate: step 2/2. Its function is as follows. Catalyzes the decarboxylation of orotidine 5'-monophosphate (OMP) to uridine 5'-monophosphate (UMP). This is Orotidine 5'-phosphate decarboxylase from Rhizobium johnstonii (strain DSM 114642 / LMG 32736 / 3841) (Rhizobium leguminosarum bv. viciae).